Consider the following 473-residue polypeptide: 1-deoxy-D-xylulose 5-phosphate reductoisomerase, chloroplastic (473 aa).

The N-terminal 49 residues, 1-49 (MALKVVSFPGDLAAVSFLDSNRGGAFNQLKVDLPFQTRDRRAVSLRRTC), are a transit peptide targeting the chloroplast. NADPH is bound by residues Thr85, Gly86, Ser87, Ile88, Gly111, Asn113, and Asn199. Lys200 is a binding site for 1-deoxy-D-xylulose 5-phosphate. Residue Glu201 participates in NADPH binding. Asp225 lines the Mn(2+) pocket. 1-deoxy-D-xylulose 5-phosphate is bound by residues Ser226, Glu227, Ser251, and His274. Glu227 is a Mn(2+) binding site. NADPH is bound at residue Gly280. The 1-deoxy-D-xylulose 5-phosphate site is built by Ser287, Asn292, Lys293, and Glu296. Glu296 is a Mn(2+) binding site.

The protein belongs to the DXR family. Requires Mn(2+) as cofactor. The cofactor is Mg(2+).

The protein resides in the plastid. It localises to the chloroplast stroma. The enzyme catalyses 2-C-methyl-D-erythritol 4-phosphate + NADP(+) = 1-deoxy-D-xylulose 5-phosphate + NADPH + H(+). Its pathway is isoprenoid biosynthesis; isopentenyl diphosphate biosynthesis via DXP pathway; isopentenyl diphosphate from 1-deoxy-D-xylulose 5-phosphate: step 1/6. In terms of biological role, enzyme of the plastid non-mevalonate pathway for isoprenoid biosynthesis that catalyzes the NADPH-dependent rearrangement and reduction of 1-deoxy-D-xylulose-5-phosphate (DXP) to 2-C-methyl-D-erythritol 4-phosphate (MEP). Required for chloroplast development. The sequence is that of 1-deoxy-D-xylulose 5-phosphate reductoisomerase, chloroplastic (DXR) from Oryza sativa subsp. japonica (Rice).